A 334-amino-acid polypeptide reads, in one-letter code: Putative heat shock protein HSP 90-alpha A5 (334 aa).

A disordered region spans residues Lys-55–Glu-107. Positions Gln-59–Glu-69 are enriched in basic and acidic residues. Residues Glu-85 to Glu-94 show a composition bias toward acidic residues. Ser-89 is subject to Phosphoserine. Positions Leu-234–Lys-267 form a coiled coil. Residues Glu-314–Gly-334 are disordered. The segment covering Gly-320 to Gly-334 has biased composition (basic and acidic residues). The short motif at Met-327–Gly-331 is the TPR repeat-binding element.

The protein belongs to the heat shock protein 90 family. Homodimer.

The protein resides in the cytoplasm. Its function is as follows. Putative molecular chaperone that may promote the maturation, structural maintenance and proper regulation of specific target proteins. The sequence is that of Putative heat shock protein HSP 90-alpha A5 (HSP90AA5P) from Homo sapiens (Human).